A 156-amino-acid chain; its full sequence is Ribosomal RNA large subunit methyltransferase H (156 aa).

Residues Leu73, Gly104, and 123–128 contribute to the S-adenosyl-L-methionine site; that span reads IGPLTL.

This sequence belongs to the RNA methyltransferase RlmH family. As to quaternary structure, homodimer.

It is found in the cytoplasm. The catalysed reaction is pseudouridine(1915) in 23S rRNA + S-adenosyl-L-methionine = N(3)-methylpseudouridine(1915) in 23S rRNA + S-adenosyl-L-homocysteine + H(+). In terms of biological role, specifically methylates the pseudouridine at position 1915 (m3Psi1915) in 23S rRNA. This Stenotrophomonas maltophilia (strain R551-3) protein is Ribosomal RNA large subunit methyltransferase H.